Reading from the N-terminus, the 331-residue chain is Proline-rich protein 33 (331 aa).

Disordered regions lie at residues Met-1–Arg-112, Ser-128–Ala-185, and Ala-204–Ser-247. The segment covering Pro-94–Gly-105 has biased composition (pro residues). Over residues Pro-149–Ser-169 the composition is skewed to low complexity. Pro residues predominate over residues Pro-170 to Ala-185. Residues Glu-217–Ala-238 show a composition bias toward low complexity.

In Homo sapiens (Human), this protein is Proline-rich protein 33 (PRR33).